Consider the following 504-residue polypeptide: Bacterial leucyl aminopeptidase (504 aa).

Positions 1–21 (MKYTKTLLAMVLSATFCQAYA) are cleaved as a signal peptide. The propeptide occupies 22–106 (EDKVWISIGA…AMPTTLASFV (85 aa)). Residues H203, D223, E258, and D285 each contribute to the Zn(2+) site. The cysteines at positions 329 and 333 are disulfide-linked. Position 362 (H362) interacts with Zn(2+). The propeptide at 406-504 (LEDGVPVTDL…SGASLKASTF (99 aa)) is removed in mature form.

Belongs to the peptidase M28 family. M28E subfamily. Zn(2+) is required as a cofactor.

It localises to the secreted. It carries out the reaction Release of an N-terminal amino acid, preferentially leucine, but not glutamic or aspartic acids.. The chain is Bacterial leucyl aminopeptidase from Vibrio proteolyticus (Aeromonas proteolytica).